We begin with the raw amino-acid sequence, 248 residues long: 5'-nucleotidase SurE (248 aa).

A divalent metal cation-binding residues include aspartate 8, aspartate 9, serine 39, and asparagine 91.

It belongs to the SurE nucleotidase family. Requires a divalent metal cation as cofactor.

Its subcellular location is the cytoplasm. The enzyme catalyses a ribonucleoside 5'-phosphate + H2O = a ribonucleoside + phosphate. Its function is as follows. Nucleotidase that shows phosphatase activity on nucleoside 5'-monophosphates. This is 5'-nucleotidase SurE from Geotalea daltonii (strain DSM 22248 / JCM 15807 / FRC-32) (Geobacter daltonii).